A 269-amino-acid chain; its full sequence is Flagellar hook-basal body complex protein FlhP (269 aa).

The stretch at Thr-7–Thr-65 forms a coiled coil.

The protein belongs to the flagella basal body rod proteins family.

This chain is Flagellar hook-basal body complex protein FlhP (flhP), found in Bacillus subtilis (strain 168).